Reading from the N-terminus, the 180-residue chain is MATPVKVVEILSAEDLRRTLTRLASQIVERTRDLSQLVLLGIYTRGVPLAELLARQIETLEGINVGVGALDITFYRDDLDQIGLRTPAKTSITLDLTGKTVVLVDDVIFKGRTIRAALNAVNEYGRPEVIRLAVLVDRGHREVPIHPDFVGKQLPTAKEEVVKVYLQDWDGRDAVELVGY.

Residues 101-113 (VVLVDDVIFKGRT) carry the PRPP-binding motif.

This sequence belongs to the purine/pyrimidine phosphoribosyltransferase family. PyrR subfamily.

The catalysed reaction is UMP + diphosphate = 5-phospho-alpha-D-ribose 1-diphosphate + uracil. Regulates the transcription of the pyrimidine nucleotide (pyr) operon in response to exogenous pyrimidines. In terms of biological role, also displays a weak uracil phosphoribosyltransferase activity which is not physiologically significant. This Trichormus variabilis (strain ATCC 29413 / PCC 7937) (Anabaena variabilis) protein is Bifunctional protein PyrR.